Consider the following 118-residue polypeptide: MNALNQAHCEACRADAPKVTDEELAELIREIPDWNIEVRDGHMELERVFLFKNFKHALAFTNAVGEIAEAEGHHPGLLTEWGKVTVTWWSHSIKGLHRNDFIMCARTDKVAEVAEGRK.

Belongs to the pterin-4-alpha-carbinolamine dehydratase family.

The catalysed reaction is (4aS,6R)-4a-hydroxy-L-erythro-5,6,7,8-tetrahydrobiopterin = (6R)-L-erythro-6,7-dihydrobiopterin + H2O. The polypeptide is Putative pterin-4-alpha-carbinolamine dehydratase (Pseudomonas putida (strain GB-1)).